We begin with the raw amino-acid sequence, 764 residues long: Acylamino-acid-releasing enzyme (764 aa).

Residues S618, D707, and H739 each act as charge relay system in the active site.

Belongs to the peptidase S9C family. As to quaternary structure, homotetramer.

The protein localises to the cytoplasm. The protein resides in the nucleus. It catalyses the reaction Cleavage of an N-acetyl or N-formyl amino acid from the N-terminus of a polypeptide.. With respect to regulation, strongly inhibited by the serine protease inhibitor diisopropyl fluorophosphate. Its function is as follows. Catalyzes the hydrolysis of the N-terminal peptide bond of an N-acetylated peptide to generate an N-acetylated amino acid and a peptide with a free N-terminus. Can degrade the glycated RuBisCO (ribulose-1,5-bisphosphate carboxylase/oxygenase) protein but not the native protein. May be involved in the elimination of glycated proteins. Plays a homeostatic role in sustaining the cytoplasmic antioxidative system. May contribute to the elimination of the oxidized proteins in the cytoplasm. This Arabidopsis thaliana (Mouse-ear cress) protein is Acylamino-acid-releasing enzyme.